The chain runs to 2541 residues: Highly reducing polyketide synthase otaA (2541 aa).

A Ketosynthase family 3 (KS3) domain is found at 9–431 (SEPLAIIGLA…GTNAHVVLED (423 aa)). Catalysis depends on for beta-ketoacyl synthase activity residues Cys182, His317, and His355. A Malonyl-CoA:ACP transacylase (MAT) domain is found at 571–888 (FIFTGQGANW…GSLLKRYETD (318 aa)). Positions 957–1092 (HELLGVPVED…GSVRVETGPH (136 aa)) are N-terminal hotdog fold. A dehydratase (DH) domain region spans residues 957–1251 (HELLGVPVED…GLDLVQLPPS (295 aa)). Positions 957-1254 (HELLGVPVED…LVQLPPSEDA (298 aa)) constitute a PKS/mFAS DH domain. Residues 1108 to 1254 (TESVDIAQMY…LVQLPPSEDA (147 aa)) are C-terminal hotdog fold. The S-adenosyl-L-methionine site is built by Ile1420 and Glu1442. Positions 1433–1605 (HAQTGIKVLE…DQELRNAGLQ (173 aa)) are methyltransferase (CMeT) domain. Residues 1838–2141 (HQPNGFHFVE…RQGNAGPWVL (304 aa)) enclose the Enoyl reductase (ER) domain. In terms of domain architecture, Ketoreductase (KR) spans 2165-2344 (ASYLLIGGFG…PATSISLGSV (180 aa)). Residues 2453–2530 (DAVELVTRAI…QLAQQAAGGS (78 aa)) form the Carrier domain. Ser2490 carries the O-(pantetheine 4'-phosphoryl)serine modification.

The cofactor is pantetheine 4'-phosphate.

It catalyses the reaction 4 malonyl-CoA + acetyl-CoA + 5 NADPH + 9 H(+) = 7-methylmellein + 3 CO2 + 5 NADP(+) + 5 CoA + 4 H2O. Its pathway is mycotoxin biosynthesis. Highly reducing polyketide synthase; part of the gene cluster that mediates the biosynthesis of ochratoxin A (OTA), a mycotoxin composed of a chlorinated type I polyketide dihydroisocoumarin moiety linked to L-phenylalanine, and demonstrated to have nephrotoxic, immunotoxic, genotoxic, neurotoxic, and teratogenic properties. OtaA catalyzes the condensation of one acetate and 4 malonate units to form the isocoumarin group. The pathway begins with the highly reducing polyketide synthase otaA that catalyzes the formation of the isocoumarin group during the initial stages of biosynthesis, starting from one acetate and 4 malonate units, to originate the characteristic pentaketide skeleton 7-methylmellein (7-MM) of the OTA molecule. The newly identified cyclase otaY might be involved in the polyketide cyclization reaction during the initial steps of the OTA biosynthesis. 7-MM is then oxidized into 7-carboxymellein (also called ochratoxin beta) by the cytochrome P450 monooxygenase otaC. The NRPS encoded by the otaB gene is involved in the linking of phenylalanine to the dihydroisocoumarin ring. The reaction catalyzed by NRPS results in the production of ochratoxin B (OTB), which is the non-chlorinated analog of OTA and which subsequently serves as the substrate of the halogenase otaD for chlorination activity to form the final molecular structure of OTA, containing a chlorine atom in the C-5 position of the molecule. This is Highly reducing polyketide synthase otaA from Aspergillus carbonarius (strain ITEM 5010).